Consider the following 413-residue polypeptide: Protein PHR1-LIKE 1 (413 aa).

Disordered stretches follow at residues 171–196 (SEPN…TPFL) and 208–233 (QQQM…SKQR). 2 stretches are compositionally biased toward polar residues: residues 181 to 191 (DSSSHNPNSEI) and 208 to 231 (QQQM…ATSK). One can recognise an HTH myb-type domain in the interval 228-288 (ATSKQRMRWT…HLQKYRTARY (61 aa)). The H-T-H motif DNA-binding region spans 259-284 (PKAVLKLLNNPGLTIYHVKSHLQKYR). Residues 322–342 (TQALRLQMEVQKRLHEQLEIQ) are coiled coil. The LHEQLE signature appears at 335 to 340 (LHEQLE). Residues 363–413 (QQKIQDNKSSSSEASPKQCNGSFAEVEVGLETLTGDQNESASASRKRVRED) are disordered. Composition is skewed to polar residues over residues 369-383 (NKSS…QCNG) and 396-405 (TGDQNESASA).

The protein belongs to the MYB-CC family. Homodimers and heterodimers. Interacts with MED25. Does not interact with PHL2 or PHL3. As to expression, expressed in shoots and roots.

The protein resides in the nucleus. Transcription factor acting as central integrator of phosphate starvation responses. Regulates FER1 expression upon phosphate starvation, linking iron and phosphate homeostasis. The sequence is that of Protein PHR1-LIKE 1 (PHL1) from Arabidopsis thaliana (Mouse-ear cress).